The following is a 349-amino-acid chain: Transcription initiation factor TFIID subunit 7 (349 aa).

The [KR]-[STA]-K motif signature appears at 3–5 (KSK). Residues 105–126 (PPVEEPVASTDPKASKKKDKDK) form a disordered region. Serine 171, serine 200, serine 201, and serine 213 each carry phosphoserine. The segment at 186–212 (EDETKEAENQGLDISSPGMSGHRQGHD) is disordered. A disordered region spans residues 227-247 (SSSSEDEDETQHQDEEDINII). A compositionally biased stretch (acidic residues) spans 230-247 (SEDEDETQHQDEEDINII). Positions 244-349 (INIIDTEEDL…QEELESLLEK (106 aa)) form a coiled coil. Position 264 is a phosphoserine (serine 264). A disordered region spans residues 328-349 (KEDREKEQLSSLQEELESLLEK).

The protein belongs to the TAF7 family. Component of the TFIID basal transcription factor complex, composed of TATA-box-binding protein TBP, and a number of TBP-associated factors (TAFs), including TAF1, TAF2, TAF3, TAF4, TAF5, TAF6, TAF7, TAF8, TAF9, TAF10, TAF11, TAF12 and TAF13. Part of a TFIID-containing RNA polymerase II pre-initiation complex that is composed of TBP and at least GTF2A1, GTF2A2, GTF2E1, GTF2E2, GTF2F1, GTF2H2, GTF2H3, GTF2H4, GTF2H5, GTF2B, TCEA1, ERCC2, ERCC3, TAF1, TAF2, TAF3, TAF4, TAF5, TAF6, TAF7, TAF8, TAF9, TAF10, TAF11, TAF12 and TAF13. Interacts with TAF1; the interaction is direct. Interacts with TAF1, TAF5, TAF11, TAF12, and TAF13, but not with TAF10 or TBP. Component of some MLL1/MLL complex, at least composed of the core components KMT2A/MLL1, ASH2L, HCFC1/HCF1, WDR5 and RBBP5, as well as the facultative components BACC1, CHD8, E2F6, HSP70, INO80C, KANSL1, LAS1L, MAX, MCRS1, MGA, MYST1/MOF, PELP1, PHF20, PRP31, RING2, RUVB1/TIP49A, RUVB2/TIP49B, SENP3, TAF1, TAF4, TAF6, TAF7, TAF9 and TEX10. Interacts with CIITA and TAF1 and inhibits their acetyltransferase activity, and behaving as a repressor of CIITA- and TAF1-regulated promoters. Post-translationally, phosphorylated by CIITA. Phosphorylation at Ser-264 by TAF1 in early G1 phase disrupts binding to TAF1. In terms of processing, ubiquitinated by TRIM26; leading to proteasomal degradation. In terms of tissue distribution, ubiquitous.

The protein localises to the nucleus. The TFIID basal transcription factor complex plays a major role in the initiation of RNA polymerase II (Pol II)-dependent transcription. TFIID recognizes and binds promoters with or without a TATA box via its subunit TBP, a TATA-box-binding protein, and promotes assembly of the pre-initiation complex (PIC). The TFIID complex consists of TBP and TBP-associated factors (TAFs), including TAF1, TAF2, TAF3, TAF4, TAF5, TAF6, TAF7, TAF8, TAF9, TAF10, TAF11, TAF12 and TAF13. TAF7 forms a promoter DNA binding subcomplex of TFIID, together with TAF1 and TAF2. Part of a TFIID complex containing TAF10 (TFIID alpha) and a TFIID complex lacking TAF10 (TFIID beta). This Homo sapiens (Human) protein is Transcription initiation factor TFIID subunit 7 (TAF7).